A 263-amino-acid chain; its full sequence is MPELPEVETIKRTLAPKILGKTIYRVEVYLPKIIKNVSVEEFTRRVVGKEIVALKRRGKYLLIDLSGKETVTVHLRMTGKLLILPKGSPKDKHTHAIFDLGDLELHFNDIRQFGGFSFEMPEIGPEPLEDEFTPEYLKTKLKASQKNLKAVLLDQKIIAGIGNIYADEILFEAGLSPKRIAASLSEDEAEELFKAIRKILALGIEYRGTSIRDYVDAENQQGSFQRLLKVYGKNGSLCVRCNNVLIRERHAGRSTHYCPHCQK.

Proline 2 acts as the Schiff-base intermediate with DNA in catalysis. Glutamate 3 serves as the catalytic Proton donor. The active-site Proton donor; for beta-elimination activity is the lysine 59. The DNA site is built by histidine 93 and arginine 111. An FPG-type zinc finger spans residues 229–263 (KVYGKNGSLCVRCNNVLIRERHAGRSTHYCPHCQK). The active-site Proton donor; for delta-elimination activity is arginine 253.

It belongs to the FPG family. Monomer. Requires Zn(2+) as cofactor.

The enzyme catalyses Hydrolysis of DNA containing ring-opened 7-methylguanine residues, releasing 2,6-diamino-4-hydroxy-5-(N-methyl)formamidopyrimidine.. It carries out the reaction 2'-deoxyribonucleotide-(2'-deoxyribose 5'-phosphate)-2'-deoxyribonucleotide-DNA = a 3'-end 2'-deoxyribonucleotide-(2,3-dehydro-2,3-deoxyribose 5'-phosphate)-DNA + a 5'-end 5'-phospho-2'-deoxyribonucleoside-DNA + H(+). In terms of biological role, involved in base excision repair of DNA damaged by oxidation or by mutagenic agents. Acts as a DNA glycosylase that recognizes and removes damaged bases. Has a preference for oxidized purines, such as 7,8-dihydro-8-oxoguanine (8-oxoG). Has AP (apurinic/apyrimidinic) lyase activity and introduces nicks in the DNA strand. Cleaves the DNA backbone by beta-delta elimination to generate a single-strand break at the site of the removed base with both 3'- and 5'-phosphates. The chain is Formamidopyrimidine-DNA glycosylase from Carboxydothermus hydrogenoformans (strain ATCC BAA-161 / DSM 6008 / Z-2901).